Consider the following 406-residue polypeptide: Tryptophan 2,3-dioxygenase (406 aa).

Ser-19 carries the post-translational modification Phosphoserine. Substrate-binding positions include 72-76 (FIITH) and Arg-144. Residue His-328 coordinates heme. Thr-342 lines the substrate pocket.

The protein belongs to the tryptophan 2,3-dioxygenase family. Homotetramer. Dimer of dimers. Requires heme as cofactor. As to expression, liver.

The catalysed reaction is L-tryptophan + O2 = N-formyl-L-kynurenine. It participates in amino-acid degradation; L-tryptophan degradation via kynurenine pathway; L-kynurenine from L-tryptophan: step 1/2. Its function is as follows. Heme-dependent dioxygenase that catalyzes the oxidative cleavage of the L-tryptophan (L-Trp) pyrrole ring and converts L-tryptophan to N-formyl-L-kynurenine. Catalyzes the oxidative cleavage of the indole moiety. This is Tryptophan 2,3-dioxygenase from Rattus norvegicus (Rat).